Consider the following 334-residue polypeptide: Ribonucleoside-diphosphate reductase small chain (334 aa).

Residues Asp77, Glu108, and His111 each coordinate Fe cation. Tyr115 is an active-site residue. Fe cation-binding residues include Glu171, Glu205, and His208.

This sequence belongs to the ribonucleoside diphosphate reductase small chain family. Heterotetramer composed of a homodimer of the large subunit (R1) and a homodimer of the small subunit (R2). Larger multisubunit protein complex are also active, composed of (R1)n(R2)n. The cofactor is Fe cation.

The catalysed reaction is a 2'-deoxyribonucleoside 5'-diphosphate + [thioredoxin]-disulfide + H2O = a ribonucleoside 5'-diphosphate + [thioredoxin]-dithiol. Ribonucleoside-diphosphate reductase holoenzyme provides the precursors necessary for viral DNA synthesis. Allows virus growth in non-dividing cells. Catalyzes the biosynthesis of deoxyribonucleotides from the corresponding ribonucleotides. This is Ribonucleoside-diphosphate reductase small chain from Ornithodoros (relapsing fever ticks).